The following is an 807-amino-acid chain: MSGWPRIYYKLLNLPLSILVKSKSIPADPAPELGLDTSRPIMYVLPYNSKADLLTLRAQCLAHDLPDPLEPLEIDGTLLPRYVFIHGGPRVFTYYTPKEESIKLFHDYLDLHRSNPNLDVQMVPVSVMFGRAPGREKGEVNPPLRMLNGVQKFFAVLWLGRDSFVRFSPSVSLRRMADEHGTDKTIAQKLARVARMHFARQRLAAVGPRLPARQDLFNKLLASRAIAKAVEDEARSKKISHEKAQQNAIALMEEIAANFSYEMIRLTDRILGFTWNRLYQGINVHNAERVRQLAHDGHELVYVPCHRSHMDYLLLSYVLYHQGLVPPHIAAGINLNFWPAGPIFRRLGAFFIRRTFKGNKLYSTVFREYLGELFSRGYSVEYFVEGGRSRTGRLLDPKTGTLSMTIQAMLRGGTRPITLIPIYIGYEHVMEVGTYAKELRGATKEKESLPQMLRGLSKLRNLGQGYVNFGEPMPLMTYLNQHVPDWRESIDPIEAVRPAWLTPTVNNIAADLMVRINNAGAANAMNLCCTALLASRQRSLTREQLTEQLNCYLDLMRNVPYSTDSTVPSASASELIDHALQMNKFEVEKDTIGDIIILPREQAVLMTYYRNNIAHMLVLPSLMAAIVTQHRHISRDVLMEHVNVLYPMLKAELFLRWDRDELPDVIDALANEMQRQGLITLQDDELHINPAHSRTLQLLAAGARETLQRYAITFWLLSANPSINRGTLEKESRTVAQRLSVLHGINAPEFFDKAVFSSLVLTLRDEGYISDSGDAEPAETMKVYQLLAELITSDVRLTIESATQGEG.

An HXXXXD motif motif is present at residues 305-310; sequence CHRSHM.

It belongs to the GPAT/DAPAT family.

It localises to the cell inner membrane. It catalyses the reaction sn-glycerol 3-phosphate + an acyl-CoA = a 1-acyl-sn-glycero-3-phosphate + CoA. It participates in phospholipid metabolism; CDP-diacylglycerol biosynthesis; CDP-diacylglycerol from sn-glycerol 3-phosphate: step 1/3. The sequence is that of Glycerol-3-phosphate acyltransferase from Escherichia coli O139:H28 (strain E24377A / ETEC).